Consider the following 347-residue polypeptide: Gas vesicle ATPase GvpN1 (347 aa).

Residues 1–11 show a composition bias toward basic residues; it reads MTNESRKRKVR. Residues 1 to 64 form a disordered region; sequence MTNESRKRKV…EGFVPEEQSF (64 aa). A compositionally biased stretch (basic and acidic residues) spans 18–55; the sequence is SRGDKKQGRSQSRDDKEIERLERQNDARGQESSTHVDE. Position 91–98 (91–98) interacts with ATP; the sequence is GPTGCGKT.

The protein belongs to the CbbQ/NirQ/NorQ/GpvN family. In terms of assembly, forms homodimers, forms a GvpN1-GvpO1 heterodimer, interacts with GvpC1 (via the latter's C-terminus) and GvpL, might interact with GvpA1.

It localises to the gas vesicle. Its subcellular location is the cytoplasm. The enzyme catalyses ATP + H2O = ADP + phosphate + H(+). In terms of biological role, an ATPase that functions in gas vesicle formation. A minor component of the gas vesicle, also found in soluble extracts. Probably enhances gas vesicle formation. Gas vesicles are hollow, gas filled proteinaceous nanostructures found in several microbial planktonic microorganisms. They allow positioning of halobacteria at the optimal depth for growth in the poorly aerated, shallow brine pools of their habitat. Expression of a 9.5 kb p-vac DNA fragment containing 2 divergently transcribed regions (gvpD-gvpE-gvpF-gvpG-gvpH-gvpI-gvpJ-gvpK-gvpL-gvpM and gvpA-gvpC-gvpN-gvpO) allows H.volcanii to produce gas vesicles. A similar region restores gas vesicle production in H.halobium without the p-vac locus, but which still have the c-vac locus. This chain is Gas vesicle ATPase GvpN1 (gvpN11), found in Halobacterium salinarum (strain ATCC 700922 / JCM 11081 / NRC-1) (Halobacterium halobium).